The following is a 451-amino-acid chain: Trigger factor (451 aa).

Residues 171 to 256 (GDRVKVNFKG…ATAIEAPEDK (86 aa)) enclose the PPIase FKBP-type domain.

This sequence belongs to the FKBP-type PPIase family. Tig subfamily.

Its subcellular location is the cytoplasm. It catalyses the reaction [protein]-peptidylproline (omega=180) = [protein]-peptidylproline (omega=0). Involved in protein export. Acts as a chaperone by maintaining the newly synthesized protein in an open conformation. Functions as a peptidyl-prolyl cis-trans isomerase. The protein is Trigger factor of Bradyrhizobium sp. (strain ORS 278).